An 892-amino-acid polypeptide reads, in one-letter code: UPF0182 protein MCA2716 (892 aa).

Helical transmembrane passes span 7 to 27, 57 to 77, 107 to 127, 163 to 183, 206 to 226, 252 to 272, and 281 to 301; these read LLTS…AIVL, ILSG…FWAA, GALP…ALPF, ILVL…VMVA, IHLN…YVLQ, LPLI…ALWF, and LALT…IDVV.

It belongs to the UPF0182 family.

Its subcellular location is the cell membrane. This chain is UPF0182 protein MCA2716, found in Methylococcus capsulatus (strain ATCC 33009 / NCIMB 11132 / Bath).